The chain runs to 117 residues: UPF0102 protein Rsph17025_0472 (117 aa).

This sequence belongs to the UPF0102 family.

This is UPF0102 protein Rsph17025_0472 from Cereibacter sphaeroides (strain ATCC 17025 / ATH 2.4.3) (Rhodobacter sphaeroides).